The following is a 502-amino-acid chain: Glycerol kinase (502 aa).

ADP is bound at residue T14. ATP-binding residues include T14, T15, and S16. T14 contributes to the sn-glycerol 3-phosphate binding site. R18 is a binding site for ADP. Residues R84, E85, and Y136 each contribute to the sn-glycerol 3-phosphate site. Positions 84, 85, and 136 each coordinate glycerol. Residue H232 is modified to Phosphohistidine; by HPr. D246 contributes to the sn-glycerol 3-phosphate binding site. Glycerol contacts are provided by D246 and Q247. ADP-binding residues include T268 and G311. 4 residues coordinate ATP: T268, G311, Q315, and G412. Positions 412 and 416 each coordinate ADP.

It belongs to the FGGY kinase family. In terms of assembly, homotetramer and homodimer (in equilibrium). The phosphoenolpyruvate-dependent sugar phosphotransferase system (PTS), including enzyme I, and histidine-containing protein (HPr) are required for the phosphorylation, which leads to the activation of the enzyme.

It carries out the reaction glycerol + ATP = sn-glycerol 3-phosphate + ADP + H(+). The protein operates within polyol metabolism; glycerol degradation via glycerol kinase pathway; sn-glycerol 3-phosphate from glycerol: step 1/1. Its activity is regulated as follows. Activated by phosphorylation and inhibited by fructose 1,6-bisphosphate (FBP). In terms of biological role, key enzyme in the regulation of glycerol uptake and metabolism. Catalyzes the phosphorylation of glycerol to yield sn-glycerol 3-phosphate. This Streptococcus pneumoniae (strain 70585) protein is Glycerol kinase.